The following is a 126-amino-acid chain: S-adenosylmethionine decarboxylase proenzyme (126 aa).

The active-site Schiff-base intermediate with substrate; via pyruvic acid is Ser-63. A Pyruvic acid (Ser); by autocatalysis modification is found at Ser-63. Catalysis depends on His-68, which acts as the Proton acceptor; for processing activity. Catalysis depends on Cys-83, which acts as the Proton donor; for catalytic activity.

Belongs to the prokaryotic AdoMetDC family. Type 1 subfamily. In terms of assembly, heterotetramer of two alpha and two beta chains arranged as a dimer of alpha/beta heterodimers. It depends on pyruvate as a cofactor. Post-translationally, is synthesized initially as an inactive proenzyme. Formation of the active enzyme involves a self-maturation process in which the active site pyruvoyl group is generated from an internal serine residue via an autocatalytic post-translational modification. Two non-identical subunits are generated from the proenzyme in this reaction, and the pyruvate is formed at the N-terminus of the alpha chain, which is derived from the carboxyl end of the proenzyme. The post-translation cleavage follows an unusual pathway, termed non-hydrolytic serinolysis, in which the side chain hydroxyl group of the serine supplies its oxygen atom to form the C-terminus of the beta chain, while the remainder of the serine residue undergoes an oxidative deamination to produce ammonia and the pyruvoyl group blocking the N-terminus of the alpha chain.

The enzyme catalyses S-adenosyl-L-methionine + H(+) = S-adenosyl 3-(methylsulfanyl)propylamine + CO2. The protein operates within amine and polyamine biosynthesis; S-adenosylmethioninamine biosynthesis; S-adenosylmethioninamine from S-adenosyl-L-methionine: step 1/1. In terms of biological role, catalyzes the decarboxylation of S-adenosylmethionine to S-adenosylmethioninamine (dcAdoMet), the propylamine donor required for the synthesis of the polyamines spermine and spermidine from the diamine putrescine. This chain is S-adenosylmethionine decarboxylase proenzyme, found in Clostridium kluyveri (strain NBRC 12016).